Reading from the N-terminus, the 323-residue chain is Ficolin-2 (323 aa).

An N-terminal signal peptide occupies residues 1–26 (MDTRGVAAAMRPLVLLVAFLCTAAPA). A Collagen-like domain is found at 52-102 (GLPGAAGPKGEAGASGPKGGQGPPGAPGEPGPPGPKGDRGEKGEPGPKGES). Residues 55-66 (GAAGPKGEAGAS) show a composition bias toward low complexity. The disordered stretch occupies residues 55–107 (GAAGPKGEAGASGPKGGQGPPGAPGEPGPPGPKGDRGEKGEPGPKGESWETEQ). A compositionally biased stretch (pro residues) spans 75–86 (PGAPGEPGPPGP). Residues 87 to 102 (KGDRGEKGEPGPKGES) are compositionally biased toward basic and acidic residues. Positions 106–323 (EQCLTGPRTC…KVSEMKFRAT (218 aa)) constitute a Fibrinogen C-terminal domain. 2 disulfide bridges follow: C108–C136 and C115–C143. N249 carries an N-linked (GlcNAc...) asparagine glycan. Residues D259, D261, and S265 each coordinate Ca(2+). Cysteines 267 and 280 form a disulfide. N302 and N310 each carry an N-linked (GlcNAc...) asparagine glycan.

It belongs to the ficolin lectin family. Homotrimer. Interacts with elastin. Interacts with MASP1 and MASP2. In terms of tissue distribution, mainly expressed in skeletal muscle.

It localises to the secreted. Its function is as follows. May function in innate immunity through activation of the lectin complement pathway. Calcium-dependent and GlcNAc-binding lectin. The chain is Ficolin-2 (FCN2) from Sus scrofa (Pig).